We begin with the raw amino-acid sequence, 319 residues long: NADH-ubiquinone oxidoreductase chain 1 (319 aa).

8 consecutive transmembrane segments (helical) span residues 5 to 25 (TINSLMYIIPILIAVAFLTLM), 72 to 92 (LLISSPILALTTAMLIWTPIP), 102 to 122 (LGLLSILAISSMAVNSILWAG), 146 to 166 (VTLGIILLSILILTGGFTMQL), 173 to 193 (FTWLLTTSWPLAMMWFISTLA), 225 to 245 (FFLTEYANIIVMNLLTCILFI), 254 to 274 (ELFLINLITKTMILSLSFLWI), and 295 to 315 (LPLTMSLCLLHTSLPISTSGI).

Belongs to the complex I subunit 1 family.

Its subcellular location is the mitochondrion inner membrane. The catalysed reaction is a ubiquinone + NADH + 5 H(+)(in) = a ubiquinol + NAD(+) + 4 H(+)(out). Its function is as follows. Core subunit of the mitochondrial membrane respiratory chain NADH dehydrogenase (Complex I) that is believed to belong to the minimal assembly required for catalysis. Complex I functions in the transfer of electrons from NADH to the respiratory chain. The immediate electron acceptor for the enzyme is believed to be ubiquinone. This is NADH-ubiquinone oxidoreductase chain 1 (MT-ND1) from Varanus flavescens (Yellow monitor).